Reading from the N-terminus, the 473-residue chain is Cysteine--tRNA ligase (473 aa).

C28 lines the Zn(2+) pocket. The 'HIGH' region motif lies at P30–N40. Residues C213, H238, and E242 each contribute to the Zn(2+) site. Positions K270 to S274 match the 'KMSKS' region motif. K273 provides a ligand contact to ATP.

Belongs to the class-I aminoacyl-tRNA synthetase family. It depends on Zn(2+) as a cofactor.

It localises to the cytoplasm. The catalysed reaction is tRNA(Cys) + L-cysteine + ATP = L-cysteinyl-tRNA(Cys) + AMP + diphosphate. This Methanosarcina mazei (strain ATCC BAA-159 / DSM 3647 / Goe1 / Go1 / JCM 11833 / OCM 88) (Methanosarcina frisia) protein is Cysteine--tRNA ligase.